The primary structure comprises 64 residues: Large ribosomal subunit protein bL32 (64 aa).

Residues 1 to 35 (MAVQKSRVTPSRRGQRRSHDALTAKQLSTDPTSGE) are disordered.

It belongs to the bacterial ribosomal protein bL32 family.

This is Large ribosomal subunit protein bL32 from Xanthomonas campestris pv. campestris (strain 8004).